A 337-amino-acid polypeptide reads, in one-letter code: GTP 3',8-cyclase (337 aa).

The region spanning N18–A242 is the Radical SAM core domain. R27 serves as a coordination point for GTP. 2 residues coordinate [4Fe-4S] cluster: C34 and C38. S-adenosyl-L-methionine is bound at residue Y40. [4Fe-4S] cluster is bound at residue C41. R76 contributes to the GTP binding site. Residue G80 participates in S-adenosyl-L-methionine binding. T107 contacts GTP. S131 provides a ligand contact to S-adenosyl-L-methionine. K168 contributes to the GTP binding site. Residue M202 coordinates S-adenosyl-L-methionine. Residues C265 and C268 each contribute to the [4Fe-4S] cluster site. GTP is bound at residue R270 to R272. C282 is a binding site for [4Fe-4S] cluster.

It belongs to the radical SAM superfamily. MoaA family. In terms of assembly, monomer and homodimer. Requires [4Fe-4S] cluster as cofactor.

The catalysed reaction is GTP + AH2 + S-adenosyl-L-methionine = (8S)-3',8-cyclo-7,8-dihydroguanosine 5'-triphosphate + 5'-deoxyadenosine + L-methionine + A + H(+). The protein operates within cofactor biosynthesis; molybdopterin biosynthesis. Catalyzes the cyclization of GTP to (8S)-3',8-cyclo-7,8-dihydroguanosine 5'-triphosphate. The sequence is that of GTP 3',8-cyclase from Shewanella denitrificans (strain OS217 / ATCC BAA-1090 / DSM 15013).